Consider the following 1326-residue polypeptide: Paired amphipathic helix protein Sin3-like 4 (1326 aa).

PAH domains lie at Gln8–Gly78, Lys95–Thr165, and Ile292–Cys367. Disordered stretches follow at residues Asp272–Asp299, Val715–Thr812, Ser844–Leu864, and Ser927–Met1000. The segment covering Gly721–Glu737 has biased composition (basic and acidic residues). 4 stretches are compositionally biased toward polar residues: residues Ser744 to Ser757, Ser781 to Thr805, Ser844 to Thr861, and Pro942 to Asp961. Residues Asp967 to Ser981 are compositionally biased toward basic and acidic residues.

Its subcellular location is the nucleus. In terms of biological role, acts as a transcriptional repressor. Plays roles in regulating gene expression and genome stability. This is Paired amphipathic helix protein Sin3-like 4 (SNL4) from Arabidopsis thaliana (Mouse-ear cress).